The following is a 310-amino-acid chain: DNA-directed RNA polymerase subunit alpha (310 aa).

Residues 1 to 230 are alpha N-terminal domain (alpha-NTD); that stretch reads MLGKVNGVQI…KLFNPLRVLD (230 aa). The interval 242 to 310 is alpha C-terminal domain (alpha-CTD); sequence NSLIKQKLIE…YKKFGVKLKH (69 aa).

Belongs to the RNA polymerase alpha chain family. As to quaternary structure, in plastids the minimal PEP RNA polymerase catalytic core is composed of four subunits: alpha, beta, beta', and beta''. When a (nuclear-encoded) sigma factor is associated with the core the holoenzyme is formed, which can initiate transcription.

Its subcellular location is the plastid. The protein localises to the chloroplast. It catalyses the reaction RNA(n) + a ribonucleoside 5'-triphosphate = RNA(n+1) + diphosphate. In terms of biological role, DNA-dependent RNA polymerase catalyzes the transcription of DNA into RNA using the four ribonucleoside triphosphates as substrates. In Cyanidium caldarium (Red alga), this protein is DNA-directed RNA polymerase subunit alpha.